Here is a 118-residue protein sequence, read N- to C-terminus: Hydrogenase maturation factor HypA (118 aa).

Ni(2+) is bound at residue H2. Residues C74, C77, C91, and C94 each contribute to the Zn(2+) site.

Belongs to the HypA/HybF family.

In terms of biological role, involved in the maturation of [NiFe] hydrogenases. Required for nickel insertion into the metal center of the hydrogenase. The protein is Hydrogenase maturation factor HypA of Helicobacter hepaticus (strain ATCC 51449 / 3B1).